A 406-amino-acid polypeptide reads, in one-letter code: Leu/Ile/Val-binding protein homolog 5 (406 aa).

A signal peptide spans 1-29 (MIGTRLPAWTRVLACGVAGLSLMTISAKA).

Belongs to the leucine-binding protein family.

Component of an amino-acid transport system. The sequence is that of Leu/Ile/Val-binding protein homolog 5 from Brucella suis biovar 1 (strain 1330).